The sequence spans 150 residues: Large ribosomal subunit protein eL19 (150 aa).

The segment at 56 to 90 (RGISSGRLKERKHKRRSKGEGRKHGSRKGKSGART) is disordered.

Belongs to the eukaryotic ribosomal protein eL19 family. As to quaternary structure, part of the 50S ribosomal subunit.

Functionally, binds to the 23S rRNA. The polypeptide is Large ribosomal subunit protein eL19 (Sulfolobus acidocaldarius (strain ATCC 33909 / DSM 639 / JCM 8929 / NBRC 15157 / NCIMB 11770)).